A 506-amino-acid chain; its full sequence is Probable cytochrome P450 309a1 (506 aa).

A phosphothreonine mark is found at threonine 75, threonine 78, and threonine 81. Cysteine 452 contributes to the heme binding site.

This sequence belongs to the cytochrome P450 family. Requires heme as cofactor.

It localises to the endoplasmic reticulum membrane. The protein localises to the microsome membrane. Functionally, may be involved in the metabolism of insect hormones and in the breakdown of synthetic insecticides. The chain is Probable cytochrome P450 309a1 (Cyp309a1) from Drosophila melanogaster (Fruit fly).